The following is a 1041-amino-acid chain: Sarcoplasmic/endoplasmic reticulum calcium ATPase 2 (1041 aa).

At 1 to 48 the chain is on the cytoplasmic side; it reads MENAHTKTVEEVLAYFGVNESTGLSLEQVKKLKEKWGSNELPAEEGKT. A helical transmembrane segment spans residues 49–69; it reads LLELVIEQFEDLLVRILLLAA. Residues 70–89 lie on the Lumenal side of the membrane; the sequence is CISFVLAWFEEGEETITAFV. Residues 90–110 traverse the membrane as a helical segment; that stretch reads EPFVILLILVANAIVGVWQER. The Cytoplasmic portion of the chain corresponds to 111–253; the sequence is NAENAIEALK…QERTPLQQKL (143 aa). Residues 254-273 form a helical membrane-spanning segment; the sequence is DEFGEQLSKVISLICIAVWI. The Lumenal segment spans residues 274-295; the sequence is INIGHFNDPVHGGSWIRGAIYY. The helical transmembrane segment at 296 to 313 threads the bilayer; sequence FKIAVALAVAAIPEGLPA. 4 residues coordinate Ca(2+): Val304, Ala305, Ile307, and Glu309. Residues 314 to 756 lie on the Cytoplasmic side of the membrane; sequence VITTCLALGT…EEGRAIYNNM (443 aa). Asp351 serves as the catalytic 4-aspartylphosphate intermediate. The Mg(2+) site is built by Asp351 and Thr353. Positions 353, 442, 489, 514, 559, 624, 625, 626, 677, and 683 each coordinate ATP. Asp702 contacts Mg(2+). Asn705 contacts ATP. A helical transmembrane segment spans residues 757-776; it reads KQFIRYLISSNVGEVVCIFL. Ca(2+) is bound by residues Asn767 and Glu770. At 777–786 the chain is on the lumenal side; the sequence is TAALGFPEAL. The helical transmembrane segment at 787–807 threads the bilayer; sequence IPVQLLWVNLVTDGLPATALG. An interaction with PLN region spans residues 787-807; the sequence is IPVQLLWVNLVTDGLPATALG. Residues Asn795, Thr798, and Asp799 each coordinate Ca(2+). Topologically, residues 808 to 827 are cytoplasmic; sequence FNPPDLDIMNKPPRNPKEPL. The helical transmembrane segment at 828–850 threads the bilayer; the sequence is ISGWLFFRYLAIGCYVGAATVGA. At 851-896 the chain is on the lumenal side; the sequence is AAWWFIAADGGPRVTFYQLSHFLQCKEDNPDFSGVDCVVFESPYPM. Cys875 and Cys887 are oxidised to a cystine. A helical transmembrane segment spans residues 897–916; it reads TMALSVLVTIEMCNALNSLS. Ca(2+) is bound at residue Glu907. Topologically, residues 917–929 are cytoplasmic; the sequence is ENQSLMRMPPWEN. Residues 930–948 form a helical membrane-spanning segment; the sequence is IWLVGAICLSMSLHFLILY. An interaction with PLN region spans residues 931-942; sequence WLVGAICLSMSL. At 949-963 the chain is on the lumenal side; that stretch reads VEPLPIIFQITPLNV. The helical transmembrane segment at 964–984 threads the bilayer; it reads TQWLMVLKISLPVILLDETLK. Residues 985–1041 lie on the Cytoplasmic side of the membrane; sequence YVARNYLEPGKDSVQPATKPCSLSACTEGVSWPFVFITLPLVIWLYSTDTNFSDMFW.

The protein belongs to the cation transport ATPase (P-type) (TC 3.A.3) family. Type IIA subfamily. In terms of assembly, interacts with sarcolipin (SLN). Interacts with phospholamban (PLN). Interacts with myoregulin (MRLN). Interacts with DWORF. Interacts with TMX2. Mg(2+) serves as cofactor. As to expression, only isoform 2 is detected in heart, while both isoforms are expressed in brain, with isoform 2 being predominant.

It localises to the endoplasmic reticulum membrane. Its subcellular location is the sarcoplasmic reticulum membrane. The enzyme catalyses Ca(2+)(in) + ATP + H2O = Ca(2+)(out) + ADP + phosphate + H(+). Reversibly inhibited by phospholamban (PLN) at low calcium concentrations. Inhibited by sarcolipin (SLN) and myoregulin (MRLN). Enhanced by DWORF; DWORF increases activity by displacing sarcolipin (SLN), phospholamban (PLN) and myoregulin (MRLN). This magnesium-dependent enzyme catalyzes the hydrolysis of ATP coupled with the translocation of calcium from the cytosol to the sarcoplasmic reticulum lumen. Isoform SERCA2A is involved in the regulation of the contraction/relaxation cycle. May act as a regulator of TNFSF11-mediated Ca(2+) signaling during osteoclastogenesis. The protein is Sarcoplasmic/endoplasmic reticulum calcium ATPase 2 (ATP2A2) of Gallus gallus (Chicken).